A 192-amino-acid polypeptide reads, in one-letter code: Putative B3 domain-containing protein At4g03160 (192 aa).

Residues 22–44 (VFFDQEEEEEDEEEEYDEESVCE) are disordered. The segment covering 25–44 (DQEEEEEDEEEEYDEESVCE) has biased composition (acidic residues). Residues 75-173 (KDNQYRLMLG…EICFAIDSTR (99 aa)) constitute a DNA-binding region (TF-B3).

The protein localises to the nucleus. This chain is Putative B3 domain-containing protein At4g03160, found in Arabidopsis thaliana (Mouse-ear cress).